The primary structure comprises 185 residues: Ribosome-recycling factor (185 aa).

This sequence belongs to the RRF family.

It is found in the cytoplasm. In terms of biological role, responsible for the release of ribosomes from messenger RNA at the termination of protein biosynthesis. May increase the efficiency of translation by recycling ribosomes from one round of translation to another. The protein is Ribosome-recycling factor of Buchnera aphidicola subsp. Acyrthosiphon pisum (strain 5A).